Reading from the N-terminus, the 735-residue chain is Ion-translocating oxidoreductase complex subunit C (735 aa).

4Fe-4S ferredoxin-type domains are found at residues 368-397 and 407-436; these read MGAPQEEKSCIRCSACADACPADLLPQQLY and KATAHHIADCIECGACAWVCPSNIPLVQYF. Positions 377, 380, 383, 387, 416, 419, 422, and 426 each coordinate [4Fe-4S] cluster. Positions 534–715 are disordered; that stretch reads QARAKQAAHP…AVDPRKAAVA (182 aa). A compositionally biased stretch (low complexity) spans 666–689; it reads QQAGSEPAEPAAPRKAAVEAAIAR.

Belongs to the 4Fe4S bacterial-type ferredoxin family. RnfC subfamily. As to quaternary structure, the complex is composed of six subunits: RsxA, RsxB, RsxC, RsxD, RsxE and RsxG. It depends on [4Fe-4S] cluster as a cofactor.

Its subcellular location is the cell inner membrane. Part of a membrane-bound complex that couples electron transfer with translocation of ions across the membrane. Required to maintain the reduced state of SoxR. The polypeptide is Ion-translocating oxidoreductase complex subunit C (Salmonella paratyphi B (strain ATCC BAA-1250 / SPB7)).